Reading from the N-terminus, the 537-residue chain is MQETGVHNGAYGTDKFGLKNLKGVYWNFGAPQLYEHALKNGEAVLSSDGALVADTGVFTGRSPKDKFTVRDATTENTMWWGGNQSITAEQFETLYQDFLKHAEGMTLFAQDLYGGADPTFRIKTRVYTELAWHSLFIRTLLRRPERAELENFVPELTLIDLPSFRADPKRHGCRSENVVAIDFARKIVLIGGTQYAGEMKKSVFTTLNYYLPEKGVLPMHCSANVGPNGDTAIFFGLSGTGKTTLSADPNRTLIGDDEHGWGKDGVFNFEGGCYAKCIKLSAENEPEIYAASTRFGAVLENVVLGEIDRKPDFDDGSKTENTRSAYPLESIPNASLTGRAGQPKNVVMLAADAFGVMPPIAKLTPAQAMYHFLSGYTAKVAGTERGVTEPTPEFSTCFGSPFLPRDPSVYGNMLRELIAKHNVDCWLVNTGWTGGIYGTGHRMPIKVTRALLTAALDGSLRNVEFRTDPYFGFAVPTALPGVPSEILDPVKTWADKAAFDTTARKLVGMFQKNFAKFEAQVDAEVRAAAPDVKMAAE.

3 residues coordinate substrate: R61, Y195, and K201. Residues K201, H220, and 236–244 each bind ATP; that span reads GLSGTGKTT. Mn(2+)-binding residues include K201 and H220. D257 serves as a coordination point for Mn(2+). The ATP site is built by E285, R323, and T448. A substrate-binding site is contributed by R323.

This sequence belongs to the phosphoenolpyruvate carboxykinase (ATP) family. Requires Mn(2+) as cofactor.

It is found in the cytoplasm. The catalysed reaction is oxaloacetate + ATP = phosphoenolpyruvate + ADP + CO2. It functions in the pathway carbohydrate biosynthesis; gluconeogenesis. Involved in the gluconeogenesis. Catalyzes the conversion of oxaloacetate (OAA) to phosphoenolpyruvate (PEP) through direct phosphoryl transfer between the nucleoside triphosphate and OAA. The chain is Phosphoenolpyruvate carboxykinase (ATP) from Rhodopseudomonas palustris (strain TIE-1).